A 420-amino-acid polypeptide reads, in one-letter code: Glutamyl-tRNA reductase (420 aa).

Residues 49–52, Ser-109, 114–116, and Gln-120 each bind substrate; these read TCNR and EPQ. Cys-50 functions as the Nucleophile in the catalytic mechanism. 189-194 contacts NADP(+); that stretch reads GAGETI.

Belongs to the glutamyl-tRNA reductase family. In terms of assembly, homodimer.

It carries out the reaction (S)-4-amino-5-oxopentanoate + tRNA(Glu) + NADP(+) = L-glutamyl-tRNA(Glu) + NADPH + H(+). It participates in porphyrin-containing compound metabolism; protoporphyrin-IX biosynthesis; 5-aminolevulinate from L-glutamyl-tRNA(Glu): step 1/2. Catalyzes the NADPH-dependent reduction of glutamyl-tRNA(Glu) to glutamate 1-semialdehyde (GSA). The chain is Glutamyl-tRNA reductase from Photorhabdus laumondii subsp. laumondii (strain DSM 15139 / CIP 105565 / TT01) (Photorhabdus luminescens subsp. laumondii).